The following is a 61-amino-acid chain: Small ribosomal subunit protein uS14 (61 aa).

C24, C27, C40, and C43 together coordinate Zn(2+).

It belongs to the universal ribosomal protein uS14 family. Zinc-binding uS14 subfamily. In terms of assembly, part of the 30S ribosomal subunit. Contacts proteins S3 and S10. Zn(2+) serves as cofactor.

In terms of biological role, binds 16S rRNA, required for the assembly of 30S particles and may also be responsible for determining the conformation of the 16S rRNA at the A site. In Thermus aquaticus, this protein is Small ribosomal subunit protein uS14.